The following is a 289-amino-acid chain: Oxaloacetate decarboxylase (289 aa).

A substrate-binding site is contributed by serine 50. Aspartate 88 serves as a coordination point for Mg(2+). The substrate site is built by arginine 159 and histidine 235.

Belongs to the isocitrate lyase family. Oxaloacetate decarboxylase subfamily. As to quaternary structure, homotetramer; dimer of dimers. The cofactor is Mg(2+).

The enzyme catalyses oxaloacetate + H(+) = pyruvate + CO2. Its function is as follows. Catalyzes the decarboxylation of oxaloacetate into pyruvate. Seems to play a role in maintaining cellular concentrations of bicarbonate and pyruvate. This chain is Oxaloacetate decarboxylase, found in Pseudomonas fluorescens (strain SBW25).